A 341-amino-acid chain; its full sequence is COP9 signalosome complex subunit 6 (341 aa).

Residues 1–43 (MEQMEVDVDMSAKPSTSSSAAAGSSMAVDKTADQNPQPQGNIM) are disordered. Low complexity predominate over residues 11–27 (SAKPSTSSSAAAGSSMA). One can recognise an MPN domain in the interval 54–188 (ISLHPLVIMN…LKLFESLIDL (135 aa)).

This sequence belongs to the peptidase M67A family. CSN6 subfamily. Component of the CSN complex, probably composed of CSN1b, alien/CSN2, CSN3, CSN4, CSN5, CSN6, CSN7 and CSN8.

Its subcellular location is the cytoplasm. It localises to the nucleus. Its function is as follows. Component of the COP9 signalosome complex (CSN), a complex involved in various cellular and developmental processes. The CSN complex is an essential regulator of the ubiquitin (Ubl) conjugation pathway by mediating the deneddylation of the cullin subunits of the SCF-type E3 ligase complexes, leading to decrease the Ubl ligase activity of SCF. The CSN complex plays an essential role in oogenesis and embryogenesis and is required for proper photoreceptor R cell differentiation and promote lamina glial cell migration or axon targeting. It also promotes Ubl-dependent degradation of cyclin E (CycE) during early oogenesis. This is COP9 signalosome complex subunit 6 (CSN6) from Drosophila melanogaster (Fruit fly).